We begin with the raw amino-acid sequence, 403 residues long: Imidazolonepropionase (403 aa).

Residues histidine 68 and histidine 70 each coordinate Fe(3+). Zn(2+) is bound by residues histidine 68 and histidine 70. Positions 77, 140, and 173 each coordinate 4-imidazolone-5-propanoate. Tyrosine 140 is an N-formimidoyl-L-glutamate binding site. Histidine 238 is a binding site for Fe(3+). Histidine 238 provides a ligand contact to Zn(2+). Glutamine 241 contributes to the 4-imidazolone-5-propanoate binding site. Residue aspartate 313 participates in Fe(3+) binding. Aspartate 313 is a Zn(2+) binding site. 2 residues coordinate N-formimidoyl-L-glutamate: asparagine 315 and glycine 317. Residue threonine 318 coordinates 4-imidazolone-5-propanoate.

The protein belongs to the metallo-dependent hydrolases superfamily. HutI family. Zn(2+) is required as a cofactor. Requires Fe(3+) as cofactor.

It localises to the cytoplasm. It catalyses the reaction 4-imidazolone-5-propanoate + H2O = N-formimidoyl-L-glutamate. The protein operates within amino-acid degradation; L-histidine degradation into L-glutamate; N-formimidoyl-L-glutamate from L-histidine: step 3/3. Catalyzes the hydrolytic cleavage of the carbon-nitrogen bond in imidazolone-5-propanoate to yield N-formimidoyl-L-glutamate. It is the third step in the universal histidine degradation pathway. The polypeptide is Imidazolonepropionase (Psychromonas ingrahamii (strain DSM 17664 / CCUG 51855 / 37)).